An 892-amino-acid polypeptide reads, in one-letter code: LEAF RUST 10 DISEASE-RESISTANCE LOCUS RECEPTOR-LIKE PROTEIN KINASE-like 2.8 (892 aa).

Residues 1-27 (MYYHSLSSYSILFFLFSLFHHLPCASS) form the signal peptide. Topologically, residues 28–496 (NQGLGWCESL…RFIATLVRYT (469 aa)) are extracellular. N-linked (GlcNAc...) asparagine glycans are attached at residues Asn-42, Asn-71, Asn-88, Asn-112, Asn-186, Asn-222, Asn-230, Asn-286, Asn-358, Asn-384, Asn-407, and Asn-458. Residues 497–517 (FIALGALTGVVIVFLVLLCPC) traverse the membrane as a helical segment. The Cytoplasmic portion of the chain corresponds to 518–892 (FRVQIFRKRK…TNSKLESSSL (375 aa)). Residue Thr-547 is modified to Phosphothreonine. The Protein kinase domain occupies 556–854 (KSFTEVVGRG…ALEVPPRPVL (299 aa)). ATP contacts are provided by residues 562–570 (VGRGGFGIV) and Lys-584. Position 629 is a phosphotyrosine (Tyr-629). Residue Asp-680 is the Proton acceptor of the active site. A phosphothreonine mark is found at Thr-717 and Thr-720.

This sequence belongs to the protein kinase superfamily. Ser/Thr protein kinase family.

Its subcellular location is the membrane. It catalyses the reaction L-seryl-[protein] + ATP = O-phospho-L-seryl-[protein] + ADP + H(+). The catalysed reaction is L-threonyl-[protein] + ATP = O-phospho-L-threonyl-[protein] + ADP + H(+). The chain is LEAF RUST 10 DISEASE-RESISTANCE LOCUS RECEPTOR-LIKE PROTEIN KINASE-like 2.8 from Arabidopsis thaliana (Mouse-ear cress).